The chain runs to 358 residues: Protein RecA (358 aa).

Position 76 to 83 (76 to 83 (GPESSGKT)) interacts with ATP.

The protein belongs to the RecA family.

The protein resides in the cytoplasm. Functionally, can catalyze the hydrolysis of ATP in the presence of single-stranded DNA, the ATP-dependent uptake of single-stranded DNA by duplex DNA, and the ATP-dependent hybridization of homologous single-stranded DNAs. It interacts with LexA causing its activation and leading to its autocatalytic cleavage. The chain is Protein RecA from Rhodospirillum centenum (strain ATCC 51521 / SW).